Consider the following 265-residue polypeptide: tRNA pseudouridine synthase A (265 aa).

D58 functions as the Nucleophile in the catalytic mechanism. Y116 is a binding site for substrate.

Belongs to the tRNA pseudouridine synthase TruA family. In terms of assembly, homodimer.

It catalyses the reaction uridine(38/39/40) in tRNA = pseudouridine(38/39/40) in tRNA. Functionally, formation of pseudouridine at positions 38, 39 and 40 in the anticodon stem and loop of transfer RNAs. This is tRNA pseudouridine synthase A from Neisseria gonorrhoeae (strain NCCP11945).